Consider the following 253-residue polypeptide: Small ribosomal subunit protein uS2 (253 aa).

The protein belongs to the universal ribosomal protein uS2 family.

This is Small ribosomal subunit protein uS2 from Chlorobium luteolum (strain DSM 273 / BCRC 81028 / 2530) (Pelodictyon luteolum).